Here is a 211-residue protein sequence, read N- to C-terminus: Metalloproteinase inhibitor 3 (211 aa).

The N-terminal stretch at 1-23 (MTPWLGLVVLLSCWSLGHWGTEA) is a signal peptide. Cys-24 provides a ligand contact to Zn(2+). Involved in metalloproteinase-binding regions lie at residues 24 to 27 (CTCS) and 88 to 89 (ES). 6 disulfide bridges follow: Cys-24-Cys-91, Cys-26-Cys-118, Cys-36-Cys-143, Cys-145-Cys-192, Cys-150-Cys-155, and Cys-163-Cys-184. The NTR domain occupies 24–143 (CTCSPSHPQD…GLNYRYHLGC (120 aa)). Positions 105–188 (TGRVYEGKMY…SKHYACIRQK (84 aa)) are mediates interaction with EFEMP1.

The protein belongs to the protease inhibitor I35 (TIMP) family. Interacts with EFEMP1. Interacts with KDR.

It localises to the secreted. Its subcellular location is the extracellular space. It is found in the extracellular matrix. Its function is as follows. Mediates a variety of processes including matrix regulation and turnover, inflammation, and angiogenesis, through reversible inhibition of zinc protease superfamily enzymes, primarily matrix metalloproteinases (MMPs). Regulates extracellular matrix (ECM) remodeling through inhibition of matrix metalloproteinases (MMP) including MMP-1, MMP-2, MMP-3, MMP-7, MMP-9, MMP-13, MMP-14 and MMP-15. Additionally, modulates the processing of amyloid precursor protein (APP) and apolipoprotein E receptor ApoER2 by inhibiting two alpha-secretases ADAM10 and ADAM17. Functions as a tumor suppressor and a potent inhibitor of angiogenesis. Exerts its anti-angiogenic effect by directly interacting with vascular endothelial growth factor (VEGF) receptor-2/KDR, preventing its binding to the VEGFA ligand. Selectively induces apoptosis in angiogenic endothelial cells through a caspase-independent cell death pathway. Mechanistically, inhibits matrix-induced focal adhesion kinase PTK2 tyrosine phosphorylation and association with paxillin/PXN and disrupts the incorporation of ITGB3, PTK2 and PXN into focal adhesion contacts on the matrix. This is Metalloproteinase inhibitor 3 (Timp3) from Rattus norvegicus (Rat).